Consider the following 239-residue polypeptide: DNA repair protein RecO (239 aa).

Belongs to the RecO family.

In terms of biological role, involved in DNA repair and RecF pathway recombination. The protein is DNA repair protein RecO of Cereibacter sphaeroides (strain KD131 / KCTC 12085) (Rhodobacter sphaeroides).